We begin with the raw amino-acid sequence, 242 residues long: Caffeoyl-CoA O-methyltransferase (242 aa).

Lys16 provides a ligand contact to substrate. S-adenosyl-L-methionine-binding positions include Thr58, Glu80, 82–83 (GV), Ser88, Asp106, and Ala135. Asp158 serves as a coordination point for substrate. Asp158 provides a ligand contact to a divalent metal cation. Residue Asp160 coordinates S-adenosyl-L-methionine. A divalent metal cation-binding residues include Asp184 and Asn185. Asn189 lines the substrate pocket.

The protein belongs to the class I-like SAM-binding methyltransferase superfamily. Cation-dependent O-methyltransferase family. CCoAMT subfamily. Requires a divalent metal cation as cofactor.

The enzyme catalyses (E)-caffeoyl-CoA + S-adenosyl-L-methionine = (E)-feruloyl-CoA + S-adenosyl-L-homocysteine + H(+). It functions in the pathway aromatic compound metabolism; phenylpropanoid biosynthesis. Methylates caffeoyl-CoA to feruloyl-CoA and 5-hydroxyferuloyl-CoA to sinapoyl-CoA. Plays a role in the synthesis of feruloylated polysaccharides. Involved in the reinforcement of the plant cell wall. Also involved in the responding to wounding or pathogen challenge by the increased formation of cell wall-bound ferulic acid polymers. This is Caffeoyl-CoA O-methyltransferase (CCOAOMT) from Solanum tuberosum (Potato).